A 229-amino-acid polypeptide reads, in one-letter code: Lantibiotic transport ATP-binding protein SrtF (229 aa).

Residues 2–225 enclose the ABC transporter domain; sequence LKIQNLKKSY…EELFNNQILF (224 aa). Residue 34-41 coordinates ATP; it reads GPNGAGKS.

The protein belongs to the ABC transporter superfamily.

In terms of biological role, implicated in the export process of the lantibiotic SrtA. The sequence is that of Lantibiotic transport ATP-binding protein SrtF (srtF) from Streptococcus pyogenes serotype M1.